The following is a 133-amino-acid chain: MHFDPVADIITKINNANRAKIVELQTEASKLKVAILNILLNEGYIRGYEIYDNKEKTKSILKIKLKFDENRVSSLNGIKQISKPGLRIYVSAEKLPKVLNGLGIAIVSTNEGLMTDKLARAKKIGGEVLAYVW.

The protein belongs to the universal ribosomal protein uS8 family. Part of the 30S ribosomal subunit. Contacts proteins S5 and S12.

Its function is as follows. One of the primary rRNA binding proteins, it binds directly to 16S rRNA central domain where it helps coordinate assembly of the platform of the 30S subunit. This is Small ribosomal subunit protein uS8 from Mycoplasmoides gallisepticum (strain R(low / passage 15 / clone 2)) (Mycoplasma gallisepticum).